The following is a 475-amino-acid chain: Ribulose bisphosphate carboxylase large chain (475 aa).

The propeptide occupies 1 to 2 (MV). P3 carries the N-acetylproline modification. K14 carries the post-translational modification N6,N6,N6-trimethyllysine. Substrate contacts are provided by N123 and T173. The active-site Proton acceptor is K175. A substrate-binding site is contributed by K177. Positions 201, 203, and 204 each coordinate Mg(2+). Position 201 is an N6-carboxylysine (K201). H294 functions as the Proton acceptor in the catalytic mechanism. R295, H327, and S379 together coordinate substrate.

Belongs to the RuBisCO large chain family. Type I subfamily. Heterohexadecamer of 8 large chains and 8 small chains. Requires Mg(2+) as cofactor.

Its subcellular location is the plastid. The protein resides in the chloroplast. It carries out the reaction 2 (2R)-3-phosphoglycerate + 2 H(+) = D-ribulose 1,5-bisphosphate + CO2 + H2O. The enzyme catalyses D-ribulose 1,5-bisphosphate + O2 = 2-phosphoglycolate + (2R)-3-phosphoglycerate + 2 H(+). RuBisCO catalyzes two reactions: the carboxylation of D-ribulose 1,5-bisphosphate, the primary event in carbon dioxide fixation, as well as the oxidative fragmentation of the pentose substrate in the photorespiration process. Both reactions occur simultaneously and in competition at the same active site. This is Ribulose bisphosphate carboxylase large chain from Chlamydomonas moewusii (Chlamydomonas eugametos).